The sequence spans 685 residues: Serotransferrin (685 aa).

An N-terminal signal peptide occupies residues 1–16 (MKPLLLLPLLGCLATI). Transferrin-like domains follow at residues 23-329 (VKWC…ALKI) and 340-666 (MKWC…SLRT). Cysteines 26 and 48 form a disulfide. Fe(3+) is bound by residues Asp-72 and Tyr-102. Cystine bridges form between Cys-125-Cys-206, Cys-170-Cys-184, and Cys-234-Cys-248. Hydrogencarbonate contacts are provided by Thr-127, Lys-131, Ala-133, and Gly-134. Tyr-200 provides a ligand contact to Fe(3+). Position 256 (His-256) interacts with Fe(3+). Cystine bridges form between Cys-343–Cys-379 and Cys-353–Cys-370. Positions 394 and 428 each coordinate Fe(3+). Intrachain disulfides connect Cys-404–Cys-678, Cys-419–Cys-639, Cys-451–Cys-526, Cys-475–Cys-667, Cys-485–Cys-499, Cys-496–Cys-509, and Cys-566–Cys-580. Hydrogencarbonate is bound by residues Thr-453, Arg-457, Ala-459, and Gly-460. Asn-476 carries N-linked (GlcNAc...) asparagine glycosylation. Tyr-520 serves as a coordination point for Fe(3+). A Fe(3+)-binding site is contributed by His-588.

This sequence belongs to the transferrin family. In terms of assembly, monomer.

The protein localises to the secreted. Transferrins are iron binding transport proteins which can bind two Fe(3+) ions in association with the binding of an anion, usually bicarbonate. This is Serotransferrin (tf) from Paralichthys olivaceus (Bastard halibut).